Here is a 1406-residue protein sequence, read N- to C-terminus: DNA-directed RNA polymerase subunit beta' (1406 aa).

Zn(2+)-binding residues include Cys72, Cys74, Cys87, and Cys90. The Mg(2+) site is built by Asp462, Asp464, and Asp466. 4 residues coordinate Zn(2+): Cys816, Cys891, Cys898, and Cys901.

It belongs to the RNA polymerase beta' chain family. In terms of assembly, the RNAP catalytic core consists of 2 alpha, 1 beta, 1 beta' and 1 omega subunit. When a sigma factor is associated with the core the holoenzyme is formed, which can initiate transcription. Mg(2+) serves as cofactor. Requires Zn(2+) as cofactor.

It catalyses the reaction RNA(n) + a ribonucleoside 5'-triphosphate = RNA(n+1) + diphosphate. In terms of biological role, DNA-dependent RNA polymerase catalyzes the transcription of DNA into RNA using the four ribonucleoside triphosphates as substrates. The protein is DNA-directed RNA polymerase subunit beta' of Psychrobacter arcticus (strain DSM 17307 / VKM B-2377 / 273-4).